We begin with the raw amino-acid sequence, 352 residues long: Molybdenum import ATP-binding protein ModC (352 aa).

An ABC transporter domain is found at 2 to 230 (MLEINVKKRL…PLFEPWQEQG (229 aa)). 32–39 (GISGSGKS) contributes to the ATP binding site. The region spanning 290–352 (KTSIRNILSG…YAQIKAVSVM (63 aa)) is the Mop domain.

This sequence belongs to the ABC transporter superfamily. Molybdate importer (TC 3.A.1.8) family. In terms of assembly, the complex is composed of two ATP-binding proteins (ModC), two transmembrane proteins (ModB) and a solute-binding protein (ModA).

Its subcellular location is the cell inner membrane. The catalysed reaction is molybdate(out) + ATP + H2O = molybdate(in) + ADP + phosphate + H(+). Functionally, part of the ABC transporter complex ModABC involved in molybdenum import. Responsible for energy coupling to the transport system. The chain is Molybdenum import ATP-binding protein ModC from Mannheimia succiniciproducens (strain KCTC 0769BP / MBEL55E).